The chain runs to 301 residues: Sulfate adenylyltransferase subunit 2 (301 aa).

Belongs to the PAPS reductase family. CysD subfamily. In terms of assembly, heterodimer composed of CysD, the smaller subunit, and CysN.

It carries out the reaction sulfate + ATP + H(+) = adenosine 5'-phosphosulfate + diphosphate. The protein operates within sulfur metabolism; hydrogen sulfide biosynthesis; sulfite from sulfate: step 1/3. Its function is as follows. With CysN forms the ATP sulfurylase (ATPS) that catalyzes the adenylation of sulfate producing adenosine 5'-phosphosulfate (APS) and diphosphate, the first enzymatic step in sulfur assimilation pathway. APS synthesis involves the formation of a high-energy phosphoric-sulfuric acid anhydride bond driven by GTP hydrolysis by CysN coupled to ATP hydrolysis by CysD. This Shewanella loihica (strain ATCC BAA-1088 / PV-4) protein is Sulfate adenylyltransferase subunit 2.